The primary structure comprises 1291 residues: Histone-lysine N-methyltransferase SETDB1 (1291 aa).

Positions 18–64 form a coiled coil; that stretch reads ESEEIAELQQAVVEELGISMEELRHFIDEELEKMDCVQQRKKQLAEL. The tract at residues 108-147 is disordered; it reads RDSSSEDESSRPTEIIEIPDEDDDVLSIDSGDAGSRTPKD. 2 positions are modified to phosphoserine: Ser-112 and Ser-117. Thr-120 is modified (phosphothreonine). The segment covering 124–133 has biased composition (acidic residues); that stretch reads EIPDEDDDVL. Residue Lys-182 forms a Glycyl lysine isopeptide (Lys-Gly) (interchain with G-Cter in SUMO2); alternate linkage. Lys-182 is covalently cross-linked (Glycyl lysine isopeptide (Lys-Gly) (interchain with G-Cter in ubiquitin); alternate). 2 consecutive Tudor domains span residues 257 to 320 and 347 to 403; these read KLYV…LKKT and LLKS…SMKT. The tract at residues 404–545 is disordered; that stretch reads SSASALEKKQ…APAPSALPAP (142 aa). Over residues 433–444 the composition is skewed to polar residues; sequence QYTQDLTGTGTQ. Pro residues predominate over residues 448–468; the sequence is VEPPQPTAPPAPPFPPAPPLS. Polar residues predominate over residues 477–515; sequence ESQLAQSRKQVAKKSTSFRPGSVGSGHSSPTSPALSENV. Residues 528–539 show a composition bias toward low complexity; the sequence is SPLGSTASAPAP. In terms of domain architecture, MBD spans 594 to 665; sequence YRGKNPLLVP…EMFCLDPYVL (72 aa). One can recognise a Pre-SET domain in the interval 727-800; the sequence is VGCDCKDGCR…MCTNRLVQHG (74 aa). Cys-729, Cys-731, Cys-735, Cys-741, Cys-743, Cys-781, Cys-785, Cys-787, and Cys-792 together coordinate Zn(2+). In terms of domain architecture, SET spans 803 to 1266; that stretch reads VRLQLFKTQN…AGTELTWDYN (464 aa). S-adenosyl-L-methionine contacts are provided by residues 813-815, Asp-851, and Tyr-853; that span reads KGW. Residue Lys-867 forms a Glycyl lysine isopeptide (Lys-Gly) (interchain with G-Cter in ubiquitin) linkage. The tract at residues 868 to 1160 is disordered; that stretch reads EGYESDAPCS…MTGPMKRQVA (293 aa). The segment covering 896 to 907 has biased composition (acidic residues); sequence EDPEESNDDSSD. Residues 951–963 show a composition bias toward pro residues; the sequence is DLGPPHIPVPPSI. Ser-1025 carries the post-translational modification Phosphoserine. Over residues 1031–1050 the composition is skewed to basic and acidic residues; sequence IKDEGDIKQAKKEDTDDRNK. Lys-1032 is covalently cross-linked (Glycyl lysine isopeptide (Lys-Gly) (interchain with G-Cter in SUMO2); alternate). Lys-1032 is covalently cross-linked (Glycyl lysine isopeptide (Lys-Gly) (interchain with G-Cter in SUMO1); alternate). Residue Lys-1038 forms a Glycyl lysine isopeptide (Lys-Gly) (interchain with G-Cter in SUMO2) linkage. Over residues 1052 to 1063 the composition is skewed to polar residues; that stretch reads SVVTESSRNYGY. Ser-1066 is modified (phosphoserine). A Glycyl lysine isopeptide (Lys-Gly) (interchain with G-Cter in SUMO2) cross-link involves residue Lys-1069. Low complexity predominate over residues 1100–1115; the sequence is LTLSSSTESEGESGTS. Positions 1116-1140 are enriched in polar residues; sequence RKPTAGQTSATAVDSDDIQTISSGS. Lys-1149 participates in a covalent cross-link: Glycyl lysine isopeptide (Lys-Gly) (interchain with G-Cter in SUMO2). Lys-1170 and Lys-1178 each carry N6,N6,N6-trimethyllysine; alternate. Lys-1170 and Lys-1178 each carry N6,N6-dimethyllysine; alternate. Residues Arg-1220 and 1223–1224 contribute to the S-adenosyl-L-methionine site; that span reads NH. Cys-1226, Cys-1279, Cys-1281, and Cys-1286 together coordinate Zn(2+). One can recognise a Post-SET domain in the interval 1275-1291; sequence KELLCCCGAIECRGRLL.

It belongs to the class V-like SAM-binding methyltransferase superfamily. Histone-lysine methyltransferase family. Suvar3-9 subfamily. As to quaternary structure, part of a complex containing at least CDYL, REST, WIZ, SETDB1, EHMT1 and EHMT2. Forms a complex with ATRX, TRIM28 and ZNF274. Probably part of a corepressor complex containing ZNF304, TRIM28, SETDB1 and DNMT1. Interacts with TRIM28/TIF1B. Interacts with ATF7IP and ATF7IP2; the interaction with ATF7IP protects SETDB1 from proteasomal degradation and is required to stimulate histone methyltransferase activity and facilitate the conversion of dimethylated to trimethylated H3 'Lys-9'. Interacts with CBX1 and CBX5. Interacts with DNMT3A and DNMT3B. Interacts with SUMO2. Interacts with MPHOSPH8. Interacts with ERG. Interacts with HDAC1, HDAC2, SIN3A and SIN3B. Interacts with ATRX. Interacts with RESF1. Interacts with ZNF638. Interacts with TASOR. Interacts with ZNF263; recruited to the SIX3 promoter along with other proteins involved in chromatin modification and transcriptional corepression where it contributes to transcriptional repression. Interacts with PHF13; the interaction probably enhances SETDB1 chromatin-associated levels and activity. Interacts with VRK1. Post-translationally, degraded by the proteasome, shielded by interaction with ATF7IP. In terms of processing, monoubiquitinated at Lys-867 by E2 enzymes of the UBE2E family. The conjugated-Ub is protected from deubiquitination by the SET domain. Monoubiquitination at Lys-867 is required for catalytic activity, H3K9 methylation and endogenous retrovirus silencing. As to expression, widely expressed. High expression in testis.

The protein resides in the nucleus. Its subcellular location is the cytoplasm. It is found in the chromosome. The catalysed reaction is N(6),N(6)-dimethyl-L-lysyl(9)-[histone H3] + S-adenosyl-L-methionine = N(6),N(6),N(6)-trimethyl-L-lysyl(9)-[histone H3] + S-adenosyl-L-homocysteine + H(+). Histone methyltransferase that specifically trimethylates 'Lys-9' of histone H3. H3 'Lys-9' trimethylation represents a specific tag for epigenetic transcriptional repression by recruiting HP1 (CBX1, CBX3 and/or CBX5) proteins to methylated histones. Mainly functions in euchromatin regions, thereby playing a central role in the silencing of euchromatic genes. H3 'Lys-9' trimethylation is coordinated with DNA methylation. Required for HUSH-mediated heterochromatin formation and gene silencing. Forms a complex with MBD1 and ATF7IP that represses transcription and couples DNA methylation and histone 'Lys-9' trimethylation. Its activity is dependent on MBD1 and is heritably maintained through DNA replication by being recruited by CAF-1. SETDB1 is targeted to histone H3 by TRIM28/TIF1B, a factor recruited by KRAB zinc-finger proteins. Probably forms a corepressor complex required for activated KRAS-mediated promoter hypermethylation and transcriptional silencing of tumor suppressor genes (TSGs) or other tumor-related genes in colorectal cancer (CRC) cells. Required to maintain a transcriptionally repressive state of genes in undifferentiated embryonic stem cells (ESCs). In ESCs, in collaboration with TRIM28, is also required for H3K9me3 and silencing of endogenous and introduced retroviruses in a DNA-methylation independent-pathway. Associates at promoter regions of tumor suppressor genes (TSGs) leading to their gene silencing. The SETDB1-TRIM28-ZNF274 complex may play a role in recruiting ATRX to the 3'-exons of zinc-finger coding genes with atypical chromatin signatures to establish or maintain/protect H3K9me3 at these transcriptionally active regions. The polypeptide is Histone-lysine N-methyltransferase SETDB1 (Homo sapiens (Human)).